A 149-amino-acid chain; its full sequence is Heat shock protein beta-3 (149 aa).

The sHSP domain maps to 47-149; it reads KARAAQAPPV…VEVKDSAGTK (103 aa).

It belongs to the small heat shock protein (HSP20) family.

The protein localises to the cytoplasm. It is found in the nucleus. Functionally, inhibitor of actin polymerization. The protein is Heat shock protein beta-3 (HSPB3) of Bos taurus (Bovine).